The sequence spans 1241 residues: ATP-dependent helicase/nuclease subunit A (1241 aa).

Residues 12–485 (SQWTDDQWKA…IDLAKNFRSR (474 aa)) form the UvrD-like helicase ATP-binding domain. 33 to 40 (AAAGSGKT) serves as a coordination point for ATP. Residues 505 to 805 (GEIDYDADAE…RIMTIHKSKG (301 aa)) enclose the UvrD-like helicase C-terminal domain.

This sequence belongs to the helicase family. AddA subfamily. As to quaternary structure, heterodimer of AddA and AddB/RexB. It depends on Mg(2+) as a cofactor.

The enzyme catalyses Couples ATP hydrolysis with the unwinding of duplex DNA by translocating in the 3'-5' direction.. It catalyses the reaction ATP + H2O = ADP + phosphate + H(+). The heterodimer acts as both an ATP-dependent DNA helicase and an ATP-dependent, dual-direction single-stranded exonuclease. Recognizes the chi site generating a DNA molecule suitable for the initiation of homologous recombination. The AddA nuclease domain is required for chi fragment generation; this subunit has the helicase and 3' -&gt; 5' nuclease activities. The sequence is that of ATP-dependent helicase/nuclease subunit A from Bacillus cereus (strain ATCC 14579 / DSM 31 / CCUG 7414 / JCM 2152 / NBRC 15305 / NCIMB 9373 / NCTC 2599 / NRRL B-3711).